The sequence spans 444 residues: Argininosuccinate synthase (444 aa).

ATP contacts are provided by residues Ala-18–Ser-26 and Ala-44. Tyr-100 is an L-citrulline binding site. ATP contacts are provided by Gly-130 and Thr-132. Positions 132, 136, and 137 each coordinate L-aspartate. L-citrulline is bound at residue Asn-136. Asp-137 contacts ATP. Residues Arg-140 and Ser-193 each coordinate L-citrulline. Asp-195 is an ATP binding site. Thr-202, Glu-204, and Glu-281 together coordinate L-citrulline.

This sequence belongs to the argininosuccinate synthase family. Type 2 subfamily. Homotetramer.

The protein resides in the cytoplasm. The enzyme catalyses L-citrulline + L-aspartate + ATP = 2-(N(omega)-L-arginino)succinate + AMP + diphosphate + H(+). It functions in the pathway amino-acid biosynthesis; L-arginine biosynthesis; L-arginine from L-ornithine and carbamoyl phosphate: step 2/3. The polypeptide is Argininosuccinate synthase (Histophilus somni (strain 2336) (Haemophilus somnus)).